A 642-amino-acid chain; its full sequence is Zinc finger protein 14 (642 aa).

In terms of domain architecture, KRAB spans 4–76; the sequence is VSFEDVAVNF…MVERLCESRK (73 aa). A disordered region spans residues 77 to 99; the sequence is GSKCGETTSQMPNVNINKETSTG. Residues 81–99 are compositionally biased toward polar residues; it reads GETTSQMPNVNINKETSTG. The C2H2-type 1 zinc-finger motif lies at 103 to 125; it reads HECSFCGKDFMHHSSLNRHMRSH. The C2H2-type 2; degenerate zinc-finger motif lies at 141–163; the sequence is CKRKAVGKTFSYRHCVRKHERTH. A C2H2-type 3 zinc finger spans residues 169-191; that stretch reads YECKQCGKAFIYYQPFQRHERIH. Residues 197 to 217 form a C2H2-type 4; atypical zinc finger; the sequence is YECKQCGKTFIYYQSFQKHAH. 15 C2H2-type zinc fingers span residues 223-245, 251-273, 279-301, 307-329, 335-357, 363-385, 391-413, 419-441, 447-469, 475-497, 503-525, 531-553, 559-581, 587-609, and 615-637; these read YECK…ERTH, YKCK…KRTH, YECK…VITH, YKCK…ERTH, YECK…ETTH, YECK…ERSH, YECK…EKIH, FECK…ERTH, YQCK…ERTH, and YRCK…ERSH.

The protein belongs to the krueppel C2H2-type zinc-finger protein family.

The protein resides in the nucleus. Functionally, may be involved in transcriptional regulation. The polypeptide is Zinc finger protein 14 (ZNF14) (Macaca fascicularis (Crab-eating macaque)).